The sequence spans 245 residues: Leucyl/phenylalanyl-tRNA--protein transferase (245 aa).

The protein belongs to the L/F-transferase family.

It is found in the cytoplasm. It catalyses the reaction N-terminal L-lysyl-[protein] + L-leucyl-tRNA(Leu) = N-terminal L-leucyl-L-lysyl-[protein] + tRNA(Leu) + H(+). The catalysed reaction is N-terminal L-arginyl-[protein] + L-leucyl-tRNA(Leu) = N-terminal L-leucyl-L-arginyl-[protein] + tRNA(Leu) + H(+). It carries out the reaction L-phenylalanyl-tRNA(Phe) + an N-terminal L-alpha-aminoacyl-[protein] = an N-terminal L-phenylalanyl-L-alpha-aminoacyl-[protein] + tRNA(Phe). Functions in the N-end rule pathway of protein degradation where it conjugates Leu, Phe and, less efficiently, Met from aminoacyl-tRNAs to the N-termini of proteins containing an N-terminal arginine or lysine. The chain is Leucyl/phenylalanyl-tRNA--protein transferase from Paraburkholderia phytofirmans (strain DSM 17436 / LMG 22146 / PsJN) (Burkholderia phytofirmans).